The primary structure comprises 279 residues: Biotin synthase (279 aa).

The 227-residue stretch at 2–228 (KTIMLCAICS…ETRVMIAGGR (227 aa)) folds into the Radical SAM core domain. [4Fe-4S] cluster-binding residues include C17, C21, and C24. The [2Fe-2S] cluster site is built by C61, C96, C154, and R221.

The protein belongs to the radical SAM superfamily. Biotin synthase family. In terms of assembly, homodimer. The cofactor is [4Fe-4S] cluster. [2Fe-2S] cluster is required as a cofactor.

It catalyses the reaction (4R,5S)-dethiobiotin + (sulfur carrier)-SH + 2 reduced [2Fe-2S]-[ferredoxin] + 2 S-adenosyl-L-methionine = (sulfur carrier)-H + biotin + 2 5'-deoxyadenosine + 2 L-methionine + 2 oxidized [2Fe-2S]-[ferredoxin]. It functions in the pathway cofactor biosynthesis; biotin biosynthesis; biotin from 7,8-diaminononanoate: step 2/2. Functionally, catalyzes the conversion of dethiobiotin (DTB) to biotin by the insertion of a sulfur atom into dethiobiotin via a radical-based mechanism. This chain is Biotin synthase, found in Campylobacter concisus (strain 13826).